Reading from the N-terminus, the 196-residue chain is Peptidyl-tRNA hydrolase (196 aa).

Y16 contacts tRNA. The active-site Proton acceptor is the H21. F67, N69, and N115 together coordinate tRNA.

The protein belongs to the PTH family. As to quaternary structure, monomer.

It is found in the cytoplasm. The catalysed reaction is an N-acyl-L-alpha-aminoacyl-tRNA + H2O = an N-acyl-L-amino acid + a tRNA + H(+). Functionally, hydrolyzes ribosome-free peptidyl-tRNAs (with 1 or more amino acids incorporated), which drop off the ribosome during protein synthesis, or as a result of ribosome stalling. Catalyzes the release of premature peptidyl moieties from peptidyl-tRNA molecules trapped in stalled 50S ribosomal subunits, and thus maintains levels of free tRNAs and 50S ribosomes. The polypeptide is Peptidyl-tRNA hydrolase (Edwardsiella ictaluri (strain 93-146)).